The chain runs to 619 residues: MKTNSSFHAAGEVATQPAWGTGEQAAQPLNGSTSRFAMSESSLADLLQKAASQYPNRAAYKFIDYDTDPAGFTETVTWWQVHRRAMIVAEELWIYASSGDRVAILAPQGLEYIIAFMGVLQAGLIAVPLPVPQFGIHDERISSALRDSAPSIILTTSSVIDEVTTYAPHACAAQGQSAPIVVAVDALDLSSSRALDPTRFERPSTAYLQYTSGSTRAPAGVVLSHKNVITNCVQLMSDYIGDSEKVPSTPVSWLPFYHDMGLMLGIILPMINQDTAVLMSPMAFLQRPARWMQLLAKHRAQISSAPNFGFELAVRRTSDDDMAGLDLGHVRTIVTGAERVNVATLRRFTERFAPFNLSETAIRPSYGLAEATVYVATAGPGRAPKSVCFDYQQLSVGQAKRTENGSEGANLVSYGAPRASTVRIVDPETRMENPAGTVGEIWVQGDNVGLGYWRNPQQTEATFRARLVTPSPGTSEGPWLRTGDLGVIFEGELFITGRIKELLVVDGANHYPEDIEATIQEITGGRVVAIAVPDDRTEKLVTIIELMKRGRTDEEEKNRLRTVKREVASAISRSHRLRVADVVMVAPGSIPVTTSGKVRRSASVERYLHHEFSRLDAMA.

It belongs to the ATP-dependent AMP-binding enzyme family.

The enzyme catalyses 17-(4-hydroxyphenyl)heptadecanoate + holo-[(phenol)carboxyphthiodiolenone synthase] + ATP = 17-(4-hydroxyphenyl)heptadecanoyl-[(phenol)carboxyphthiodiolenone synthase] + AMP + diphosphate. The catalysed reaction is 19-(4-hydroxyphenyl)nonadecanoate + holo-[(phenol)carboxyphthiodiolenone synthase] + ATP = 19-(4-hydroxyphenyl)nonadecanoyl-[(phenol)carboxyphthiodiolenone synthase] + AMP + diphosphate. Its pathway is lipid metabolism; fatty acid biosynthesis. Functionally, catalyzes the activation of long-chain fatty acids as acyl-adenylates (acyl-AMP), which are then transferred to the multifunctional polyketide synthase PpsA for further chain extension. Involved in the biosynthesis of phenolphthiocerol, which is an important intermediate in the biosynthesis of phenolic glycolipid (PGL), also called mycosid B. The polypeptide is 4-hydroxyphenylalkanoate adenylyltransferase (fadD29) (Mycobacterium bovis (strain ATCC BAA-935 / AF2122/97)).